A 171-amino-acid polypeptide reads, in one-letter code: ATP synthase subunit b (171 aa).

Residues L26–L48 form a helical membrane-spanning segment.

It belongs to the ATPase B chain family. As to quaternary structure, F-type ATPases have 2 components, F(1) - the catalytic core - and F(0) - the membrane proton channel. F(1) has five subunits: alpha(3), beta(3), gamma(1), delta(1), epsilon(1). F(0) has four main subunits: a(1), b(1), b'(1) and c(10-14). The alpha and beta chains form an alternating ring which encloses part of the gamma chain. F(1) is attached to F(0) by a central stalk formed by the gamma and epsilon chains, while a peripheral stalk is formed by the delta, b and b' chains.

It is found in the cellular thylakoid membrane. Its function is as follows. F(1)F(0) ATP synthase produces ATP from ADP in the presence of a proton or sodium gradient. F-type ATPases consist of two structural domains, F(1) containing the extramembraneous catalytic core and F(0) containing the membrane proton channel, linked together by a central stalk and a peripheral stalk. During catalysis, ATP synthesis in the catalytic domain of F(1) is coupled via a rotary mechanism of the central stalk subunits to proton translocation. In terms of biological role, component of the F(0) channel, it forms part of the peripheral stalk, linking F(1) to F(0). The chain is ATP synthase subunit b from Synechococcus elongatus (strain ATCC 33912 / PCC 7942 / FACHB-805) (Anacystis nidulans R2).